A 546-amino-acid chain; its full sequence is Chaperonin GroEL (546 aa).

Residues 30 to 33 (TLGP), lysine 51, 87 to 91 (DGTTT), glycine 415, 479 to 481 (NAA), and aspartate 495 each bind ATP. The disordered stretch occupies residues 526-546 (KKDEPAMPAGGGMGGMGGMDF). A compositionally biased stretch (gly residues) spans 534–546 (AGGGMGGMGGMDF).

The protein belongs to the chaperonin (HSP60) family. In terms of assembly, forms a cylinder of 14 subunits composed of two heptameric rings stacked back-to-back. Interacts with the co-chaperonin GroES.

It localises to the cytoplasm. The enzyme catalyses ATP + H2O + a folded polypeptide = ADP + phosphate + an unfolded polypeptide.. Functionally, together with its co-chaperonin GroES, plays an essential role in assisting protein folding. The GroEL-GroES system forms a nano-cage that allows encapsulation of the non-native substrate proteins and provides a physical environment optimized to promote and accelerate protein folding. The polypeptide is Chaperonin GroEL (Xanthomonas campestris pv. campestris (strain 8004)).